A 173-amino-acid chain; its full sequence is Co-chaperone protein HscB homolog (173 aa).

The region spanning 5–77 (CHFALFDLQP…PRRARYLLAI (73 aa)) is the J domain.

This sequence belongs to the HscB family. In terms of assembly, interacts with HscA and stimulates its ATPase activity.

Functionally, co-chaperone involved in the maturation of iron-sulfur cluster-containing proteins. Seems to help targeting proteins to be folded toward HscA. The polypeptide is Co-chaperone protein HscB homolog (Pseudomonas putida (strain W619)).